The chain runs to 314 residues: Glycerol-1-phosphate dehydrogenase [NAD(P)+] (314 aa).

NAD(+) contacts are provided by residues 52-56 (GKPLD) and 74-77 (TSAS). D79 contacts substrate. S83 is a binding site for NAD(+). Residue D131 coordinates substrate. Zn(2+) is bound by residues D131 and H211. Residue H215 coordinates substrate. H231 provides a ligand contact to Zn(2+).

It belongs to the glycerol-1-phosphate dehydrogenase family. It depends on Zn(2+) as a cofactor.

It is found in the cytoplasm. The enzyme catalyses sn-glycerol 1-phosphate + NAD(+) = dihydroxyacetone phosphate + NADH + H(+). It catalyses the reaction sn-glycerol 1-phosphate + NADP(+) = dihydroxyacetone phosphate + NADPH + H(+). Its pathway is membrane lipid metabolism; glycerophospholipid metabolism. Catalyzes the NAD(P)H-dependent reduction of dihydroxyacetonephosphate (DHAP or glycerone phosphate) to glycerol 1-phosphate (G1P). The G1P thus generated is used as the glycerophosphate backbone of phospholipids in the cellular membranes of Archaea. The chain is Glycerol-1-phosphate dehydrogenase [NAD(P)+] from Korarchaeum cryptofilum (strain OPF8).